An 87-amino-acid chain; its full sequence is Small ribosomal subunit protein bS20 (87 aa).

A disordered region spans residues 1-20; that stretch reads MANHKSAEKRARQTIKKTER.

Belongs to the bacterial ribosomal protein bS20 family.

Functionally, binds directly to 16S ribosomal RNA. The chain is Small ribosomal subunit protein bS20 from Campylobacter jejuni subsp. jejuni serotype O:2 (strain ATCC 700819 / NCTC 11168).